The primary structure comprises 155 residues: Dau c 1 isoallergen Dau c 1.0401 (155 aa).

Belongs to the BetVI family. In terms of assembly, monomer. As to expression, expressed in roots (at protein level). Expressed in roots.

The protein is Dau c 1 isoallergen Dau c 1.0401 of Daucus carota subsp. sativus (Carrot).